Here is a 247-residue protein sequence, read N- to C-terminus: Protein eak-4 (247 aa).

A lipid anchor (N-myristoyl glycine) is attached at G2.

As to expression, expressed in the 2 embryonic head hypodermal cells XXXL/R.

It is found in the cell membrane. In terms of biological role, together with eak-6 and sdf-9, negatively regulates dauer larva formation downstream of the insulin-like receptor daf-2 and in parallel with age-1, pdk-1 and akt-1. The chain is Protein eak-4 from Caenorhabditis elegans.